A 331-amino-acid polypeptide reads, in one-letter code: Tetraacyldisaccharide 4'-kinase (331 aa).

55–62 (SVGGNGKT) lines the ATP pocket.

This sequence belongs to the LpxK family.

The catalysed reaction is a lipid A disaccharide + ATP = a lipid IVA + ADP + H(+). Its pathway is glycolipid biosynthesis; lipid IV(A) biosynthesis; lipid IV(A) from (3R)-3-hydroxytetradecanoyl-[acyl-carrier-protein] and UDP-N-acetyl-alpha-D-glucosamine: step 6/6. Functionally, transfers the gamma-phosphate of ATP to the 4'-position of a tetraacyldisaccharide 1-phosphate intermediate (termed DS-1-P) to form tetraacyldisaccharide 1,4'-bis-phosphate (lipid IVA). The chain is Tetraacyldisaccharide 4'-kinase from Aeromonas salmonicida (strain A449).